A 399-amino-acid polypeptide reads, in one-letter code: MSTPVTRTQVPDGVRDRLPSEAAAMRRLSARLDNVFRAWGYREVSTPVIEYLEAVAAGAANWGRREDLYQFFDRKGRTLALRPDMTTPIARLMATRLADEPLPLRLSYFAPVFRHRELRAGATSEIWQAGVELVGAPGEAADAEVISLACAAVRAADLTGFRIGLGHVGVVEGLFESAGVDPQAAAVLKEAMVARDLVAFEQGVARAGLSGERAERLLALVHFHGSYAEAVARFGGVGGRVAEALQHLGRVLEVLEALGVAEQVNLDLGLVRSLGYYTGVVFEGYLPGIGAPVLGGGRYDNLVAEFGRPLAATGFALEVDRLLMAQEQQGALAAEPGLDAVIACPPGQEAAAMAWAARLRAQGLAVEVDFLDRTGEELAAYARARAAARVLRPGVPSIH.

It belongs to the class-II aminoacyl-tRNA synthetase family. HisZ subfamily. As to quaternary structure, heteromultimer composed of HisG and HisZ subunits.

The protein localises to the cytoplasm. It functions in the pathway amino-acid biosynthesis; L-histidine biosynthesis; L-histidine from 5-phospho-alpha-D-ribose 1-diphosphate: step 1/9. Its function is as follows. Required for the first step of histidine biosynthesis. May allow the feedback regulation of ATP phosphoribosyltransferase activity by histidine. The chain is ATP phosphoribosyltransferase regulatory subunit from Symbiobacterium thermophilum (strain DSM 24528 / JCM 14929 / IAM 14863 / T).